The chain runs to 612 residues: DNA damage checkpoint protein 1 (612 aa).

Position 436 is a phosphoserine (S436). Residues 576 to 612 are disordered; that stretch reads GLLNSQNDTSNHKKQDNKEMEDGLGLTQVEKPRGIFD. Over residues 585 to 596 the composition is skewed to basic and acidic residues; it reads SNHKKQDNKEME.

It belongs to the DDC1 family. In terms of assembly, component of the checkpoint clamp complex composed of DDC1, MEC3 and RAD17. The interaction with MEC3 is performed in a RAD17-dependent manner. The checkpoint clamp complex loads onto DNA in an ATP-dependent manner through its interaction with the RFC-RAD4 checkpoint clamp loader complex. Interacts with the DNA polymerase zeta subunit REV7 and DPB11. Post-translationally, phosphorylated during cell cycle S-phase and in response to DNA damage. This phosphorylation is MEC14 dependent. Also hosphorylated by CDC28.

Its subcellular location is the cytoplasm. It localises to the nucleus. Component of the checkpoint clamp complex involved in the surveillance mechanism that allows the DNA repair pathways to act to restore the integrity of the DNA prior to DNA synthesis or separation of the replicated chromosomes. Associates with sites of DNA damage and modulates the MEC1 signaling pathway and the activation of RAD53 in response to DNA damage at phase G1. The complex also physically regulates DNA polymerase zeta-dependent mutagenesis by controlling the access of polymerase zeta to damaged DNA. In Saccharomyces cerevisiae (strain ATCC 204508 / S288c) (Baker's yeast), this protein is DNA damage checkpoint protein 1 (DDC1).